Reading from the N-terminus, the 102-residue chain is MVDSSYFNRSSTNIIKYPIITDKATRLLENNQYSFIVNPYSDKITIKAAIEYLFNVKVIKVNTCHLPKKKKRVGKYLGWKSHYKKAIVTLSQGDRINLFAEN.

The protein belongs to the universal ribosomal protein uL23 family. Part of the 50S ribosomal subunit.

It is found in the plastid. It localises to the chloroplast. Functionally, binds to 23S rRNA. In Trieres chinensis (Marine centric diatom), this protein is Large ribosomal subunit protein uL23c (rpl23).